The sequence spans 398 residues: NADH-ubiquinone oxidoreductase 49 kDa subunit (398 aa).

The protein belongs to the complex I 49 kDa subunit family.

It localises to the mitochondrion. It carries out the reaction a ubiquinone + NADH + 5 H(+)(in) = a ubiquinol + NAD(+) + 4 H(+)(out). Its function is as follows. Core subunit of the mitochondrial membrane respiratory chain NADH dehydrogenase (Complex I) that is believed to belong to the minimal assembly required for catalysis. Complex I functions in the transfer of electrons from NADH to the respiratory chain. The immediate electron acceptor for the enzyme is believed to be ubiquinone. Component of the iron-sulfur (IP) fragment of the enzyme. Component of the iron-sulfur (IP) fragment of the enzyme. This chain is NADH-ubiquinone oxidoreductase 49 kDa subunit (NAD7), found in Pylaiella littoralis (Seaweed).